Consider the following 276-residue polypeptide: Putative oxidoreductase SadH (276 aa).

A substrate-binding site is contributed by Ser142. The active-site Proton acceptor is Tyr155.

This sequence belongs to the short-chain dehydrogenases/reductases (SDR) family.

Required for maintaining the appropriate mycolic acid composition and permeability of the envelope on its exposure to acidic pH. The chain is Putative oxidoreductase SadH (sadH) from Mycobacterium tuberculosis (strain CDC 1551 / Oshkosh).